The primary structure comprises 370 residues: Anhydro-N-acetylmuramic acid kinase (370 aa).

13-20 (GTSLDGVD) is an ATP binding site.

Belongs to the anhydro-N-acetylmuramic acid kinase family.

The catalysed reaction is 1,6-anhydro-N-acetyl-beta-muramate + ATP + H2O = N-acetyl-D-muramate 6-phosphate + ADP + H(+). The protein operates within amino-sugar metabolism; 1,6-anhydro-N-acetylmuramate degradation. Its pathway is cell wall biogenesis; peptidoglycan recycling. Functionally, catalyzes the specific phosphorylation of 1,6-anhydro-N-acetylmuramic acid (anhMurNAc) with the simultaneous cleavage of the 1,6-anhydro ring, generating MurNAc-6-P. Is required for the utilization of anhMurNAc either imported from the medium or derived from its own cell wall murein, and thus plays a role in cell wall recycling. This is Anhydro-N-acetylmuramic acid kinase from Vibrio cholerae serotype O1 (strain ATCC 39315 / El Tor Inaba N16961).